We begin with the raw amino-acid sequence, 428 residues long: Ribulose bisphosphate carboxylase (428 aa).

Lysine 151 serves as the catalytic Proton acceptor. Position 153 (lysine 153) interacts with substrate. Lysine 177, aspartate 179, and glutamate 180 together coordinate Mg(2+). The residue at position 177 (lysine 177) is an N6-carboxylysine. The active-site Proton acceptor is the histidine 270. Substrate contacts are provided by residues arginine 271, histidine 303, 354 to 356 (SGG), and 376 to 379 (QFGG).

The protein belongs to the RuBisCO large chain family. Type III subfamily. In terms of assembly, homodimer. In contrast to form I RuBisCO, the form III RuBisCO is composed solely of large subunits. Requires Mg(2+) as cofactor.

The catalysed reaction is 2 (2R)-3-phosphoglycerate + 2 H(+) = D-ribulose 1,5-bisphosphate + CO2 + H2O. It carries out the reaction D-ribulose 1,5-bisphosphate + O2 = 2-phosphoglycolate + (2R)-3-phosphoglycerate + 2 H(+). Reversibly inhibited by O(2). Its function is as follows. Catalyzes the addition of molecular CO(2) and H(2)O to ribulose 1,5-bisphosphate (RuBP), generating two molecules of 3-phosphoglycerate (3-PGA). Functions in an archaeal AMP degradation pathway, together with AMP phosphorylase and R15P isomerase. The polypeptide is Ribulose bisphosphate carboxylase (Methanosarcina acetivorans (strain ATCC 35395 / DSM 2834 / JCM 12185 / C2A)).